Consider the following 234-residue polypeptide: UPF0173 metal-dependent hydrolase Meso_1362 (234 aa).

Belongs to the UPF0173 family.

The sequence is that of UPF0173 metal-dependent hydrolase Meso_1362 from Chelativorans sp. (strain BNC1).